The chain runs to 241 residues: U2 small nuclear ribonucleoprotein B'' (241 aa).

The 80-residue stretch at 12 to 91 folds into the RRM 1 domain; it reads QTLYVNNLYE…RPMKIQYCKS (80 aa). The span at 99–126 shows a compositional bias: basic and acidic residues; the sequence is LDGTYMEKKREREENDKKGSNKKQDRKS. A disordered region spans residues 99 to 169; the sequence is LDGTYMEKKR…PRDDPPNKTL (71 aa). The span at 129–152 shows a compositional bias: low complexity; the sequence is QQQQQQKRPGAPTSTTSTTSPTTS. The RRM 2 domain occupies 167–241; it reads KTLFVENLPD…KPMVVSFAAQ (75 aa).

This sequence belongs to the RRM U1 A/B'' family. As to quaternary structure, identified in the spliceosome B complex. Identified in the spliceosome C complex.

It localises to the nucleus. Functionally, involved in pre-mRNA splicing as component of the spliceosome. Associated with sn-RNP U2, where it contributes to the binding of stem loop IV of U2 snRNA. In Dictyostelium discoideum (Social amoeba), this protein is U2 small nuclear ribonucleoprotein B'' (snrpb2).